The sequence spans 404 residues: Proteasomal ubiquitin receptor ADRM1-A (404 aa).

The Pru domain maps to 17-130 (SSSKYLVEFR…RKLNEYLNNP (114 aa)). Residues 195–247 (GSGGPTTSSSSSSSRSQSAAVTPSSTTSSTRTTSAPVAPAAAPATTPSPAVSS) are compositionally biased toward low complexity. Disordered regions lie at residues 195–258 (GSGG…TSPT) and 376–404 (FAKA…MSLD). A compositionally biased stretch (polar residues) spans 248–258 (NDGASEATSPT). Residues 278 to 390 (TGEGGQQVDL…QSTSSQKERE (113 aa)) form the DEUBAD domain. Residues 386 to 395 (QKERESSEKK) are compositionally biased toward basic and acidic residues.

The protein belongs to the ADRM1 family. Component of the 19S proteasome regulatory particle complex. The 26S proteasome consists of a 20S core particle (CP) and two 19S regulatory subunits (RP).

The protein resides in the cytoplasm. Its subcellular location is the nucleus. In terms of biological role, component of the 26S proteasome, a multiprotein complex involved in the ATP-dependent degradation of ubiquitinated proteins. This complex plays a key role in the maintenance of protein homeostasis by removing misfolded or damaged proteins, which could impair cellular functions, and by removing proteins whose functions are no longer required. Therefore, the proteasome participates in numerous cellular processes, including cell cycle progression, apoptosis, or DNA damage repair. Within the complex, functions as a proteasomal ubiquitin receptor. The sequence is that of Proteasomal ubiquitin receptor ADRM1-A (adrm1-a) from Xenopus laevis (African clawed frog).